We begin with the raw amino-acid sequence, 407 residues long: Phospholipase A1-II 7 (407 aa).

Residue Ser-230 is the Acyl-ester intermediate of the active site. Catalysis depends on charge relay system residues Ser-230, Asp-299, and His-336.

The protein belongs to the AB hydrolase superfamily. Lipase family.

It localises to the cytoplasm. Functionally, acylhydrolase that catalyzes the hydrolysis of phospholipids at the sn-1 position. This Oryza sativa subsp. indica (Rice) protein is Phospholipase A1-II 7.